The primary structure comprises 206 residues: Guanylate kinase (206 aa).

The region spanning 6 to 184 (GTLYIISAPS…ALDDLKAIFR (179 aa)) is the Guanylate kinase-like domain. An ATP-binding site is contributed by 13–20 (APSGAGKS).

Belongs to the guanylate kinase family.

The protein localises to the cytoplasm. It carries out the reaction GMP + ATP = GDP + ADP. Its function is as follows. Essential for recycling GMP and indirectly, cGMP. In Pseudomonas fluorescens (strain Pf0-1), this protein is Guanylate kinase.